The sequence spans 262 residues: Apolipoprotein A-Ia (262 aa).

The signal sequence occupies residues 1–18 (MKFVALALTLLLALGSQA). The 3 X approximate tandem repeats stretch occupies residues 32–63 (YKAAALVYLNQVKDQAEKALDNLDGTDYEQYK). A run of 2 repeats spans residues 64–85 (LQLS…QALT) and 87–107 (YAET…ERVM). The tract at residues 64 to 262 (LQLSESLTKL…YETIAKAIQA (199 aa)) is 10 X approximate tandem repeats. A 3; half-length repeat occupies 108-118 (TDVEDLRSKLE). A run of 5 repeats spans residues 119-140 (PHRA…EKLE), 141-162 (PVFQ…AKLE), 163-184 (PLMD…SKVV), 185-206 (PMVE…TMAA), and 207-228 (PYAE…EKIA). The 9; half-length repeat unit spans residues 229-239 (PHTQDLQTRME). The stretch at 240 to 262 (PYMENVRTTFAQMYETIAKAIQA) is repeat 10.

It belongs to the apolipoprotein A1/A4/E family. As to quaternary structure, homodimer. Interacts with naxe and yjefn3.

It is found in the secreted. Its function is as follows. Participates in the reverse transport of cholesterol from tissues to the liver for excretion by promoting cholesterol efflux from tissues and by acting as a cofactor for the lecithin cholesterol acyltransferase (LCAT). The sequence is that of Apolipoprotein A-Ia from Danio rerio (Zebrafish).